The primary structure comprises 91 residues: MVLSNVVRVVNRLNSAGTRSGLMGIRQLRRKYTYRSGALKPMPNVIPFGLLGVVLTVIPGLLIGATISKNMANFLEENDLFVPSDDDDDDD.

The helical transmembrane segment at 45 to 65 (VIPFGLLGVVLTVIPGLLIGA) threads the bilayer.

It belongs to the SMDT1/EMRE family.

The protein resides in the mitochondrion inner membrane. Essential regulatory subunit of the mitochondrial calcium uniporter (mcu) channel, a protein that mediates calcium uptake into mitochondria. This Aedes aegypti (Yellowfever mosquito) protein is Essential MCU regulator, mitochondrial.